A 1405-amino-acid chain; its full sequence is Xanthine dehydrogenase (1405 aa).

The region spanning 17–104 is the 2Fe-2S ferredoxin-type domain; sequence NKLTFYVNGV…GKHLITVEGI (88 aa). The [2Fe-2S] cluster site is built by cysteine 56, cysteine 61, cysteine 64, cysteine 86, cysteine 125, cysteine 128, cysteine 161, and cysteine 163. The FAD-binding PCMH-type domain occupies 288–474; it reads FGNEQKVWFR…TKIFVPETVP (187 aa). FAD is bound by residues 316-323, phenylalanine 397, 407-411, aspartate 420, isoleucine 464, and lysine 483; these read IVGGASEI and TPAGN. Residues glutamine 833 and phenylalanine 864 each contribute to the Mo-molybdopterin site. Substrate is bound by residues glutamate 868 and arginine 946. Arginine 978 contributes to the Mo-molybdopterin binding site. Position 980 (phenylalanine 980) interacts with substrate. Alanine 1147 is a Mo-molybdopterin binding site. Glutamate 1333 (proton acceptor) is an active-site residue.

This sequence belongs to the xanthine dehydrogenase family. In terms of assembly, homodimer. Requires Mo-molybdopterin as cofactor. [2Fe-2S] cluster is required as a cofactor. FAD serves as cofactor.

The protein localises to the cytoplasm. It carries out the reaction hypoxanthine + NAD(+) + H2O = xanthine + NADH + H(+). The enzyme catalyses xanthine + NAD(+) + H2O = urate + NADH + H(+). It functions in the pathway purine metabolism. Completely inhibited by allopurinol and significantly inhibited by adenine. Inhibited by Fe(2+), Cd(2+) and Zn(2+) and strongly inhibited by Cu(2+). Mg(2+) and Mo(2+) have no effect on activity. Key enzyme in purine degradation. Catalyzes the oxidation of hypoxanthine to xanthine. Catalyzes the oxidation of xanthine to uric acid. Oxidizes xanthine, hypoxanthine and pterine at high rates. Can also act on purine and guanine. The polypeptide is Xanthine dehydrogenase (Blastobotrys adeninivorans (Yeast)).